A 519-amino-acid polypeptide reads, in one-letter code: uncharacterized protein (519 aa).

A run of 13 helical transmembrane segments spans residues 19–39 (FSSS…AIAT), 42–62 (VLVS…DWQI), 87–107 (MNIV…TVSG), 128–148 (LLAA…SLAV), 179–199 (VMMP…GLLA), 220–240 (FYAI…FDIA), 270–290 (LILP…YTGA), 311–331 (VGTS…LLII), 345–365 (WIVG…AWTI), 386–406 (IPMQ…AFST), 413–433 (FGIM…ELLL), 475–495 (LPYA…VGFT), and 496–516 (YSGL…IFAV).

Its subcellular location is the cell membrane. This is an uncharacterized protein from Haemophilus influenzae (strain ATCC 51907 / DSM 11121 / KW20 / Rd).